The sequence spans 147 residues: Large ribosomal subunit protein uL22c (147 aa).

This sequence belongs to the universal ribosomal protein uL22 family. As to quaternary structure, part of the 50S ribosomal subunit.

Its subcellular location is the plastid. The protein resides in the chloroplast. Functionally, this protein binds specifically to 23S rRNA. The globular domain of the protein is located near the polypeptide exit tunnel on the outside of the subunit, while an extended beta-hairpin is found that lines the wall of the exit tunnel in the center of the 70S ribosome. This is Large ribosomal subunit protein uL22c (rpl22) from Lolium perenne (Perennial ryegrass).